The following is a 348-amino-acid chain: Lysophosphatidic acid receptor 2 (348 aa).

Over 1 to 30 the chain is Extracellular; the sequence is MGQCYYNETIGFFYNNSGKELSLHWRPKDV. Asn7 and Asn15 each carry an N-linked (GlcNAc...) asparagine glycan. The chain crosses the membrane as a helical span at residues 31 to 51; the sequence is VVVALGLTVSVLVLLTNLLVI. The Cytoplasmic portion of the chain corresponds to 52–66; that stretch reads AAIASNRRFHQPIYY. A helical membrane pass occupies residues 67 to 87; it reads LLGNLAAADLFAGMAYLFLMF. Over 88–104 the chain is Extracellular; sequence HTGPRTARLSIKGWFLR. Residues 105 to 124 form a helical membrane-spanning segment; it reads QGLLDTSLTASVATLLAIAV. Residues 125–144 lie on the Cytoplasmic side of the membrane; it reads ERHRSVMAVQLHSRLPRGRV. Residues 145-165 traverse the membrane as a helical segment; that stretch reads VTLIVGVWAAALGLGLLPAHF. Residues 166 to 185 lie on the Extracellular side of the membrane; sequence WHCLCDLDSCSRMVPLFSRS. The helical transmembrane segment at 186-206 threads the bilayer; it reads YLAAWALSSLLVFLLMVAVYT. The Cytoplasmic segment spans residues 207 to 239; that stretch reads RIFFYVRRRVERMAEHVSCHPRYRETTLSLVKT. A helical transmembrane segment spans residues 240-260; sequence VVIILGAFVVCWTPGQVVLLL. At 261–270 the chain is on the extracellular side; the sequence is DGLDCKSCNV. The chain crosses the membrane as a helical span at residues 271-291; it reads LAVEKYFLLLAEANSLVNAVV. At 292–348 the chain is on the cytoplasmic side; the sequence is YSCRDAEMRRTFRRLLCCMCLRWSSHKSARYSASAQTGASTRIMLPENGRPLMDSTL. Cys308 is lipidated: S-palmitoyl cysteine. The PDZ-binding signature appears at 345 to 348; sequence DSTL.

Belongs to the G-protein coupled receptor 1 family. Interacts with SLC9A3R2/NHERF2, MAGI3 and PLCB3. Interacts with RALA and GRK2. In terms of tissue distribution, most abundantly expressed in testes, kidney, and embryonic brain. Other organs also express the transcript, including heart, lung, spleen, thymus, stomach, and adult brain. Several have little or no expression, including liver, small intestine, and skeletal muscle.

It is found in the cell surface. The protein resides in the cell membrane. In terms of biological role, receptor for lysophosphatidic acid (LPA), a mediator of diverse cellular activities. Seems to be coupled to the G(i)/G(o), G(12)/G(13), and G(q) families of heteromeric G proteins. Plays a key role in phospholipase C-beta (PLC-beta) signaling pathway Stimulates phospholipase C (PLC) activity in a manner that is independent of RALA activation. The protein is Lysophosphatidic acid receptor 2 of Mus musculus (Mouse).